A 227-amino-acid polypeptide reads, in one-letter code: Urease accessory protein UreF (227 aa).

This sequence belongs to the UreF family. As to quaternary structure, ureD, UreF and UreG form a complex that acts as a GTP-hydrolysis-dependent molecular chaperone, activating the urease apoprotein by helping to assemble the nickel containing metallocenter of UreC. The UreE protein probably delivers the nickel.

It localises to the cytoplasm. Functionally, required for maturation of urease via the functional incorporation of the urease nickel metallocenter. This Actinobacillus pleuropneumoniae serotype 5b (strain L20) protein is Urease accessory protein UreF.